We begin with the raw amino-acid sequence, 414 residues long: Cyclohex-1-ene-1-carbonyl-CoA dehydrogenase (414 aa).

Asp124 functions as the Proton acceptor in the catalytic mechanism. FAD is bound by residues Ala157, Thr158, Ser164, and Thr190. Cyclohex-1-ene-1-carbonyl-CoA is bound at residue Ser164. Ser164 contributes to the cyclohexa-1,5-diene-1-carbonyl-CoA binding site. Cyclohex-1-ene-1-carbonyl-CoA is bound by residues Lys211, Arg275, and Thr396. The cyclohexa-1,5-diene-1-carbonyl-CoA site is built by Lys211, Arg275, and Thr396. Residues Thr398 and Gln400 each coordinate FAD. Residue Arg408 coordinates cyclohex-1-ene-1-carbonyl-CoA. Arg408 serves as a coordination point for cyclohexa-1,5-diene-1-carbonyl-CoA.

It belongs to the acyl-CoA dehydrogenase family. In terms of assembly, homotetramer. FAD serves as cofactor.

It catalyses the reaction cyclohex-1-ene-1-carbonyl-CoA + oxidized [electron-transfer flavoprotein] + H(+) = cyclohexa-1,5-diene-1-carbonyl-CoA + reduced [electron-transfer flavoprotein]. Mediates the conversion of cyclohex-1-ene-1-carbonyl-CoA (Ch1CoA) into (E)-2-cyclohex-1,5-diene-1-carbonyl-CoA in biosynthesis of cyclohexane-1-carboxylate, a by-product produced during fermentation of benzoate and crotonate to acetate. Also able to further convert (E)-2-cyclohex-1,5-diene-1-carbonyl-CoA to benzoyl-CoA. This Syntrophus aciditrophicus (strain SB) protein is Cyclohex-1-ene-1-carbonyl-CoA dehydrogenase.